The primary structure comprises 91 residues: Ragulator complex protein LAMTOR5 homolog (91 aa).

This sequence belongs to the LAMTOR5 family. In terms of assembly, part of the Ragulator complex.

It localises to the cytoplasm. Its subcellular location is the lysosome. In terms of biological role, regulator of the TOR pathway, a signaling cascade that promotes cell growth in response to growth factors, energy levels, and amino acids. As part of the Ragulator complex, may activate the TOR signaling cascade in response to amino acids. The sequence is that of Ragulator complex protein LAMTOR5 homolog from Ixodes scapularis (Black-legged tick).